The primary structure comprises 210 residues: Protein GET1 (210 aa).

Topologically, residues 1 to 4 (MPSL) are lumenal. Residues 5 to 24 (LIIVLIIHVVTYLINTIGAN) traverse the membrane as a helical segment. Over 25 to 110 (TIDSLLWLLY…SFDLAVKSVR (86 aa)) the chain is Cytoplasmic. Residues 39–95 (NQTSQTADEQRRLKREVMQLKREMNATSSQDEFAKWAKLRRRHDKTMEEYEAKNKAL) are a coiled coil. A helical transmembrane segment spans residues 111 to 131 (FFSTTGLKLFLQFWFSKTPIF). Residues 132–155 (ELPRGWIPWQVEWVLSFPRAPLGT) are Lumenal-facing. The chain crosses the membrane as a helical span at residues 156 to 172 (VSIQIWGGVCATVVSLA). Topologically, residues 173–210 (GDAIGVVNVYLTSKAPKQKEPATSGENSARPMAIKKEL) are cytoplasmic. Residues 189–210 (KQKEPATSGENSARPMAIKKEL) are disordered.

Belongs to the WRB/GET1 family. As to quaternary structure, interacts with GET3.

The protein localises to the endoplasmic reticulum membrane. In terms of biological role, required for the post-translational delivery of tail-anchored (TA) proteins to the endoplasmic reticulum. Acts as a membrane receptor for soluble GET3, which recognizes and selectively binds the transmembrane domain of TA proteins in the cytosol. The protein is Protein GET1 of Coccidioides posadasii (strain C735) (Valley fever fungus).